A 133-amino-acid polypeptide reads, in one-letter code: DNA-directed RNA polymerase subunit omega (133 aa).

The protein belongs to the RNA polymerase subunit omega family. The RNAP catalytic core consists of 2 alpha, 1 beta, 1 beta' and 1 omega subunit. When a sigma factor is associated with the core the holoenzyme is formed, which can initiate transcription.

It catalyses the reaction RNA(n) + a ribonucleoside 5'-triphosphate = RNA(n+1) + diphosphate. Its function is as follows. Promotes RNA polymerase assembly. Latches the N- and C-terminal regions of the beta' subunit thereby facilitating its interaction with the beta and alpha subunits. The chain is DNA-directed RNA polymerase subunit omega from Mesorhizobium japonicum (strain LMG 29417 / CECT 9101 / MAFF 303099) (Mesorhizobium loti (strain MAFF 303099)).